Consider the following 134-residue polypeptide: MRHRQSGRQLNRNSSHRQAMFRNMASSLVKHGVIKTTVAKAKELRRVLEPLITLAKTDSVANRRLAFARTQDKEVVGILFNELGARYQERPGGYTRILKCGFRTGDKAPMAYIELVDRPVVEDAPEVVEESAEA.

It belongs to the bacterial ribosomal protein bL17 family. In terms of assembly, part of the 50S ribosomal subunit. Contacts protein L32.

This Colwellia psychrerythraea (strain 34H / ATCC BAA-681) (Vibrio psychroerythus) protein is Large ribosomal subunit protein bL17.